Consider the following 77-residue polypeptide: Translation initiation factor IF-1, chloroplastic (77 aa).

Residues 1–71 (MKEQKWIHEG…TRGRIIYRLR (71 aa)) enclose the S1-like domain.

The protein belongs to the IF-1 family. Component of the 30S ribosomal translation pre-initiation complex which assembles on the 30S ribosome in the order IF-2 and IF-3, IF-1 and N-formylmethionyl-tRNA(fMet); mRNA recruitment can occur at any time during PIC assembly.

It localises to the plastid. Its subcellular location is the chloroplast. Functionally, one of the essential components for the initiation of protein synthesis. Stabilizes the binding of IF-2 and IF-3 on the 30S subunit to which N-formylmethionyl-tRNA(fMet) subsequently binds. Helps modulate mRNA selection, yielding the 30S pre-initiation complex (PIC). Upon addition of the 50S ribosomal subunit IF-1, IF-2 and IF-3 are released leaving the mature 70S translation initiation complex. The chain is Translation initiation factor IF-1, chloroplastic from Hedera helix (English ivy).